The chain runs to 70 residues: Large ribosomal subunit protein eL38 (70 aa).

This sequence belongs to the eukaryotic ribosomal protein eL38 family.

The chain is Large ribosomal subunit protein eL38 (RpL38) from Julodis onopordi (Jewel beetle).